The following is a 235-amino-acid chain: UPF0173 metal-dependent hydrolase Oant_3663 (235 aa).

Belongs to the UPF0173 family.

The protein is UPF0173 metal-dependent hydrolase Oant_3663 of Brucella anthropi (strain ATCC 49188 / DSM 6882 / CCUG 24695 / JCM 21032 / LMG 3331 / NBRC 15819 / NCTC 12168 / Alc 37) (Ochrobactrum anthropi).